Here is a 375-residue protein sequence, read N- to C-terminus: 5-amino-6-(D-ribitylamino)uracil--L-tyrosine 4-hydroxyphenyl transferase 1 (375 aa).

The 235-residue stretch at 50–284 folds into the Radical SAM core domain; sequence VTYVVNRNIN…AVSRILFHGH (235 aa). The [4Fe-4S] cluster site is built by Cys-64, Cys-68, and Cys-71.

This sequence belongs to the radical SAM superfamily. CofH family. As to quaternary structure, consists of two subunits, CofG and CofH. [4Fe-4S] cluster is required as a cofactor.

It carries out the reaction 5-amino-6-(D-ribitylamino)uracil + L-tyrosine + S-adenosyl-L-methionine = 5-amino-5-(4-hydroxybenzyl)-6-(D-ribitylimino)-5,6-dihydrouracil + 2-iminoacetate + 5'-deoxyadenosine + L-methionine + H(+). It participates in cofactor biosynthesis; coenzyme F0 biosynthesis. Catalyzes the radical-mediated synthesis of 5-amino-5-(4-hydroxybenzyl)-6-(D-ribitylimino)-5,6-dihydrouracil from 5-amino-6-(D-ribitylamino)uracil and L-tyrosine. This Methanosarcina acetivorans (strain ATCC 35395 / DSM 2834 / JCM 12185 / C2A) protein is 5-amino-6-(D-ribitylamino)uracil--L-tyrosine 4-hydroxyphenyl transferase 1.